Consider the following 206-residue polypeptide: Ribosomal RNA small subunit methyltransferase G (206 aa).

S-adenosyl-L-methionine contacts are provided by residues Gly74, Leu79, 125–126, and Arg140; that span reads VE.

The protein belongs to the methyltransferase superfamily. RNA methyltransferase RsmG family.

The protein localises to the cytoplasm. It carries out the reaction guanosine(527) in 16S rRNA + S-adenosyl-L-methionine = N(7)-methylguanosine(527) in 16S rRNA + S-adenosyl-L-homocysteine. In terms of biological role, specifically methylates the N7 position of guanine in position 527 of 16S rRNA. The protein is Ribosomal RNA small subunit methyltransferase G of Shewanella sp. (strain ANA-3).